The sequence spans 173 residues: Putative pre-16S rRNA nuclease (173 aa).

This sequence belongs to the YqgF nuclease family.

It is found in the cytoplasm. In terms of biological role, could be a nuclease involved in processing of the 5'-end of pre-16S rRNA. The chain is Putative pre-16S rRNA nuclease from Rhodopirellula baltica (strain DSM 10527 / NCIMB 13988 / SH1).